The sequence spans 1544 residues: Lysine-specific demethylase 5B (1544 aa).

Residues 1-14 show a composition bias toward pro residues; that stretch reads MEPATTLPPGPRPA. Residues 1 to 22 are disordered; the sequence is MEPATTLPPGPRPALPLGGPGP. The region spanning 32–73 is the JmjN domain; sequence CPVFEPSWEEFADPFAFIHKIRPIAEQTGICKVRPPPDWQPP. An ARID domain is found at 97 to 187; that stretch reads TRVKLNFLDQ…ILNPYNLFLS (91 aa). Residues K148, K204, K209, K242, K274, and K278 each participate in a glycyl lysine isopeptide (Lys-Gly) (interchain with G-Cter in SUMO2) cross-link. The disordered stretch occupies residues 200–228; the sequence is TSDTKDKEYKPHDIPQRQSVQPAETCPPA. The segment covering 202 to 214 has biased composition (basic and acidic residues); sequence DTKDKEYKPHDIP. Residues 269-297 are disordered; the sequence is NEKEMKSTIKQEPTEKKDCELESEKEKPK. The PHD-type 1 zinc finger occupies 309 to 359; sequence LYVCLLCGSGNDEDRLLLCDGCDDSYHTFCLVPPLHDVPKGDWRCPKCLAQ. Y425 contacts 2-oxoglutarate. The JmjC domain maps to 453 to 619; the sequence is EYLDSGWNLN…LGRQCVEHYR (167 aa). The Fe cation site is built by H499 and E501. The 2-oxoglutarate site is built by S507, N509, and K517. H587 contacts Fe cation. The segment at 692–744 adopts a C5HC2 zinc-finger fold; that stretch reads CIKCKTTCFMSAISCSCKPGLLVCLHHVKELCSCPPYKYNLRYRYTLDDLYPM. Residue K769 forms a Glycyl lysine isopeptide (Lys-Gly) (interchain with G-Cter in SUMO2) linkage. K832 is subject to N6-acetyllysine. At S986 the chain carries Phosphoserine. A PHD-type 2 zinc finger spans residues 1176 to 1224; it reads MKVCLCQKTPATPMIQCELCRDAFHTSCVAAPSISQSSRIWLCPHCRRS. Residues 1297-1314 are compositionally biased toward polar residues; sequence QASATDKVSQPPGTTSFS. The segment at 1297-1318 is disordered; the sequence is QASATDKVSQPPGTTSFSLPDD. S1328 bears the Phosphoserine mark. The segment covering 1374–1388 has biased composition (polar residues); that stretch reads PSSVQQADRSSPVRS. Residues 1374 to 1447 form a disordered region; the sequence is PSSVQQADRS…IKLSHPKDMD (74 aa). Basic and acidic residues predominate over residues 1389 to 1427; it reads SSEKNDCLRGKRDAINSPERKLKRRPEREGLPSERWDRV. Positions 1428 to 1441 are enriched in basic residues; it reads KHMRTPQKKKIKLS. Residue K1450 forms a Glycyl lysine isopeptide (Lys-Gly) (interchain with G-Cter in SUMO2) linkage. Phosphoserine is present on S1456. The PHD-type 3 zinc finger occupies 1484–1538; it reads DAICPAVSCLQPEGDEVDWVQCDGSCNQWFHQVCVGVSPEMAEKEDYICVRCTGK.

This sequence belongs to the JARID1 histone demethylase family. As to quaternary structure, interacts with FOXG1B, PAX9, MYC, MYCN and RB1. Interacts with HDAC1, HDAC4, HDAC5 and HDAC7. Interacts (via PHD-type 1 zinc finger) with histone H3 unmodified at 'Lys-4'; the interaction is inhibited when histone H3 is methylated at 'Arg-2' or 'Lys-4'. Fe(2+) serves as cofactor. In terms of tissue distribution, present at highest levels in testis, where it is enriched in spermatogonia and pachytene cells (at protein level).

The protein resides in the nucleus. The catalysed reaction is N(6),N(6),N(6)-trimethyl-L-lysyl(4)-[histone H3] + 3 2-oxoglutarate + 3 O2 = L-lysyl(4)-[histone H3] + 3 formaldehyde + 3 succinate + 3 CO2. Functionally, histone demethylase that demethylates 'Lys-4' of histone H3, thereby playing a central role in histone code. Does not demethylate histone H3 'Lys-9' or H3 'Lys-27'. Demethylates trimethylated, dimethylated and monomethylated H3 'Lys-4'. Acts as a transcriptional corepressor for FOXG1B and PAX9. Represses the CLOCK-BMAL1 heterodimer-mediated transcriptional activation of the core clock component PER2. The chain is Lysine-specific demethylase 5B (Kdm5b) from Mus musculus (Mouse).